The sequence spans 110 residues: Large ribosomal subunit protein uL22 (110 aa).

Belongs to the universal ribosomal protein uL22 family. Part of the 50S ribosomal subunit.

In terms of biological role, this protein binds specifically to 23S rRNA; its binding is stimulated by other ribosomal proteins, e.g. L4, L17, and L20. It is important during the early stages of 50S assembly. It makes multiple contacts with different domains of the 23S rRNA in the assembled 50S subunit and ribosome. Functionally, the globular domain of the protein is located near the polypeptide exit tunnel on the outside of the subunit, while an extended beta-hairpin is found that lines the wall of the exit tunnel in the center of the 70S ribosome. This is Large ribosomal subunit protein uL22 from Shewanella loihica (strain ATCC BAA-1088 / PV-4).